The sequence spans 242 residues: Ubiquinone biosynthesis O-methyltransferase (242 aa).

4 residues coordinate S-adenosyl-L-methionine: R44, G64, D85, and M129.

The protein belongs to the methyltransferase superfamily. UbiG/COQ3 family.

It catalyses the reaction a 3-demethylubiquinol + S-adenosyl-L-methionine = a ubiquinol + S-adenosyl-L-homocysteine + H(+). The catalysed reaction is a 3-(all-trans-polyprenyl)benzene-1,2-diol + S-adenosyl-L-methionine = a 2-methoxy-6-(all-trans-polyprenyl)phenol + S-adenosyl-L-homocysteine + H(+). It functions in the pathway cofactor biosynthesis; ubiquinone biosynthesis. O-methyltransferase that catalyzes the 2 O-methylation steps in the ubiquinone biosynthetic pathway. The chain is Ubiquinone biosynthesis O-methyltransferase from Klebsiella pneumoniae (strain 342).